The following is a 71-amino-acid chain: Small ribosomal subunit protein eS17 (71 aa).

Belongs to the eukaryotic ribosomal protein eS17 family.

This Pyrobaculum aerophilum (strain ATCC 51768 / DSM 7523 / JCM 9630 / CIP 104966 / NBRC 100827 / IM2) protein is Small ribosomal subunit protein eS17.